Consider the following 125-residue polypeptide: Snaclec B7 (125 aa).

3 disulfide bridges follow: cysteine 2-cysteine 13, cysteine 30-cysteine 119, and cysteine 96-cysteine 111. Positions 9 to 120 (HEGHCYKVFK…CNISQYFVCQ (112 aa)) constitute a C-type lectin domain. Asparagine 112 carries an N-linked (GlcNAc...) asparagine glycan.

Belongs to the snaclec family. Heterodimer; disulfide-linked. In terms of tissue distribution, expressed by the venom gland.

It localises to the secreted. Functionally, interferes with one step of hemostasis (modulation of platelet aggregation, or coagulation cascade, for example). The chain is Snaclec B7 from Macrovipera lebetinus (Levantine viper).